A 178-amino-acid chain; its full sequence is MSRVGKKPINIPKGVEVSVQGSKILFKGAKEQKELETYGRVQIHLQDGTLSFACVDSQAQSRAYWGTYRALANNIIVGLSQGFTKVLEINGVGYKANISGKNLEMALGFSHPVIYPIPAGVEMSVDKNTITIKGADKQQIGQIAAEIRKFRPPEPYKGKGIKYSDEMIVRKAGKTSKK.

This sequence belongs to the universal ribosomal protein uL6 family. In terms of assembly, part of the 50S ribosomal subunit.

In terms of biological role, this protein binds to the 23S rRNA, and is important in its secondary structure. It is located near the subunit interface in the base of the L7/L12 stalk, and near the tRNA binding site of the peptidyltransferase center. The sequence is that of Large ribosomal subunit protein uL6 from Helicobacter hepaticus (strain ATCC 51449 / 3B1).